The following is a 364-amino-acid chain: Fructose-1,6-bisphosphatase class 1 2 (364 aa).

The Mg(2+) site is built by Glu-101, Asp-123, Leu-125, and Asp-126. Substrate is bound by residues 126-129 (DGSS) and Asn-218. A Mg(2+)-binding site is contributed by Glu-290.

This sequence belongs to the FBPase class 1 family. As to quaternary structure, homotetramer. It depends on Mg(2+) as a cofactor.

It is found in the cytoplasm. The enzyme catalyses beta-D-fructose 1,6-bisphosphate + H2O = beta-D-fructose 6-phosphate + phosphate. The protein operates within carbohydrate biosynthesis; gluconeogenesis. The polypeptide is Fructose-1,6-bisphosphatase class 1 2 (Cupriavidus necator (strain ATCC 17699 / DSM 428 / KCTC 22496 / NCIMB 10442 / H16 / Stanier 337) (Ralstonia eutropha)).